The following is a 319-amino-acid chain: Annexin A4 (319 aa).

Residue alanine 2 is modified to N-acetylalanine. Residue threonine 7 is modified to Phosphothreonine. Serine 12 carries the phosphoserine modification. 4 Annexin repeats span residues 14–85 (FNAM…GMMT), 86–157 (PTVL…SLSA), 169–241 (ALVR…AIVK), and 245–316 (NKSA…VLCG). Lysine 213, lysine 293, and lysine 300 each carry N6-acetyllysine.

The protein belongs to the annexin family.

Its subcellular location is the zymogen granule membrane. Functionally, calcium/phospholipid-binding protein which promotes membrane fusion and is involved in exocytosis. The polypeptide is Annexin A4 (Homo sapiens (Human)).